Reading from the N-terminus, the 160-residue chain is Ribosomal RNA large subunit methyltransferase H (160 aa).

S-adenosyl-L-methionine contacts are provided by residues L76, G108, and 127–132; that span reads FGFMTW.

Belongs to the RNA methyltransferase RlmH family. Homodimer.

It is found in the cytoplasm. The catalysed reaction is pseudouridine(1915) in 23S rRNA + S-adenosyl-L-methionine = N(3)-methylpseudouridine(1915) in 23S rRNA + S-adenosyl-L-homocysteine + H(+). Specifically methylates the pseudouridine at position 1915 (m3Psi1915) in 23S rRNA. The sequence is that of Ribosomal RNA large subunit methyltransferase H from Bartonella tribocorum (strain CIP 105476 / IBS 506).